We begin with the raw amino-acid sequence, 70 residues long: Melittin (70 aa).

The signal sequence occupies residues 1 to 21; the sequence is MKFLVNVALVFMVVYISFIYA. The propeptide at 22 to 43 is removed by a dipeptidylpeptidase; the sequence is APEPEPAPEAEAEADAEADPEA. An N-formylglycine; partial modification is found at Gly44. Gln69 carries the glutamine amide modification.

This sequence belongs to the melittin family. In terms of assembly, monomer (in solution and for integration into membranes), homotetramer (in solution and potentially as a toroidal pore in membranes), and potenially homomultimer (as a toroidal pore in membranes). Expressed by the venom gland.

The protein localises to the secreted. It localises to the target cell membrane. Functionally, main toxin of bee venom with strong hemolytic activity and antimicrobial activity. It has enhancing effects on bee venom phospholipase A2 activity. This amphipathic toxin binds to negatively charged membrane surface and forms pore by inserting into lipid bilayers inducing the leakage of ions and molecules and the enhancement of permeability that ultimately leads to cell lysis. It acts as a voltage-gated pore with higher selectivity for anions over cations. The ion conductance has been shown to be voltage-dependent. Self-association of melittin in membranes is promoted by high ionic strength, but not by the presence of negatively charged lipids. In vivo, intradermal injection into healthy human volunteers produce sharp pain sensation and an inflammatory response. It produces pain by activating primary nociceptor cells directly and indirectly due to its ability to activate plasma membrane phospholipase A2 and its pore-forming activity. The polypeptide is Melittin (MELT) (Polistes hebraeus (Paper wasp)).